The following is a 55-amino-acid chain: Lantibiotic epilancin (55 aa).

A propeptide spans Met1–Gln24 (cleaved by ElxP). At Ser25 the chain carries D-lactate; by the dehydratase ElxB and the dehydrogenase ElxO. Ser27 carries the 2,3-didehydroalanine (Ser); by the dehydratase ElxB modification. 2,3-didehydrobutyrine; by the dehydratase ElxB is present on Thr31. Ser32 is modified (2,3-didehydroalanine (Ser); by the dehydratase ElxB). The segment at residues Ser36–Cys40 is a cross-link (lanthionine (Ser-Cys); by the dehydratase ElxB and the cyclase ElxC). Cross-links (beta-methyllanthionine (Thr-Cys); by the dehydratase ElxB and the cyclase ElxC) lie at residues Thr44–Cys47 and Thr46–Cys49. Thr52 is modified (2,3-didehydrobutyrine; by the dehydratase ElxB).

Belongs to the type A lantibiotic family. Post-translationally, maturation of this lantibiotic involves the enzymatic conversion of Thr, and Ser into dehydrated AA by ElxB and the formation of thioether bonds with cysteine by the cyclase ElxC. The next steps are cleavage of the leader peptide by ElxP and membrane translocation by ElxT. The leader peptide may be removed before membrane translocation, in contrast to other lantibiotics for which the cleavage occur after translocation. This is suggested by the probable cytoplasmic localization of the serine protease ElxP that cleaves the leader peptide. It is not established whether the 2,3-didehydrobutyrine is the E- or Z-isomer. In terms of processing, the N-terminal D-lactate is probably produced by dehydration of Ser-25 by ElxB, followed by proteolytic removal of the leader peptide by the serine protease ElxP and hydrolysis of the resulting new N-terminal dehydroalanine. This hydrolysis may occur spontaneously. The pyruvate group thus formed is reduced to D-lactate by the NADPH-dependent oxidoreductase ElxO. This N-terminal D-lactate protects the lantibiotic against degradation against aminopeptidase.

Lanthionine-containing peptide antibiotic (lantibiotic) active on Gram-positive bacteria such as staphylococci, enterococci and streptococci. The bactericidal activity of lantibiotics is based on depolarization of energized bacterial cytoplasmic membranes, initiated by the formation of aqueous transmembrane pores. The protein is Lantibiotic epilancin (elkA) of Staphylococcus epidermidis.